The chain runs to 661 residues: tRNA uridine 5-carboxymethylaminomethyl modification enzyme MnmG (661 aa).

13–18 is a binding site for FAD; that stretch reads GGGHAG. 285-299 is an NAD(+) binding site; the sequence is GPRYCPSVEDKINRF.

This sequence belongs to the MnmG family. As to quaternary structure, homodimer. Heterotetramer of two MnmE and two MnmG subunits. FAD serves as cofactor.

It is found in the cytoplasm. Functionally, NAD-binding protein involved in the addition of a carboxymethylaminomethyl (cmnm) group at the wobble position (U34) of certain tRNAs, forming tRNA-cmnm(5)s(2)U34. The polypeptide is tRNA uridine 5-carboxymethylaminomethyl modification enzyme MnmG (Acidovorax sp. (strain JS42)).